Here is a 586-residue protein sequence, read N- to C-terminus: Retron Ec67 protein (586 aa).

Residues 29 to 262 (FLTNVLYRIG…SRQEVTGLTV (234 aa)) form the Reverse transcriptase domain. The Mg(2+) site is built by Asp-120, Asp-201, and Asp-202.

The protein belongs to the bacterial reverse transcriptase family.

The enzyme catalyses DNA(n) + a 2'-deoxyribonucleoside 5'-triphosphate = DNA(n+1) + diphosphate. It catalyses the reaction Endonucleolytic cleavage to 5'-phosphomonoester.. Its function is as follows. Reverse transcriptase (RT) component of antiviral defense system retron Ec67, minimally composed of a non-coding RNA (ncRNA) and this RT. Expression of these 2 elements confers protection against bacteriophage T5. At multiplicity of infection (MOI) of 0.02 cultures grow normally when infected with T5 without collapsing, at MOI 2 cultures enter growth stasis. Responsible for synthesis of msDNA-Ec67 (a branched molecule with RNA linked by a 2',5'-phosphodiester bond to ssDNA). The retron transcript serves as primer (from a conserved internal G residue) and template for the reaction, and codes for the RT. Can use other retrons as substrate (msDNA-Mx162 and msDNA-Ec86). Also able to synthesize DNA from a DNA template at least in vitro, although the enzyme is less active with a DNA template. This is Retron Ec67 protein from Escherichia coli.